We begin with the raw amino-acid sequence, 338 residues long: Mugineic-acid 3-dioxygenase (338 aa).

Residues 180–283 enclose the Fe2OG dioxygenase domain; that stretch reads DISGGRVVVD…RLSVASFIVP (104 aa). 3 residues coordinate Fe cation: H208, D210, and H264. Position 274 (R274) interacts with 2-oxoglutarate.

Belongs to the iron/ascorbate-dependent oxidoreductase family. Requires Fe(2+) as cofactor. It depends on L-ascorbate as a cofactor. As to expression, expressed in roots, but not in leaves.

It catalyses the reaction mugineate + 2-oxoglutarate + O2 = 3-epihydroxymugineate + succinate + CO2 + H(+). The catalysed reaction is 2'-deoxymugineate + 2-oxoglutarate + O2 = 3-epihydroxy-2'-deoxymugineate + succinate + CO2 + H(+). Its function is as follows. Involved in the biosynthesis of mugineic acid family of phytosiderophores. Hydroxylates the C-3 positions of mugineic acid (MA) and 2'-deoxymugineic acid (DMA). May be involved in boron tolerance. The protein is Mugineic-acid 3-dioxygenase (IDS2) of Hordeum vulgare (Barley).